A 335-amino-acid polypeptide reads, in one-letter code: Glyceraldehyde-3-phosphate dehydrogenase (335 aa).

NAD(+) is bound by residues 10-11 (RI), D33, K77, and T119. Residues 150 to 152 (SCT), T181, 210 to 211 (TG), and R233 contribute to the D-glyceraldehyde 3-phosphate site. The Nucleophile role is filled by C151. Residue N315 coordinates NAD(+).

This sequence belongs to the glyceraldehyde-3-phosphate dehydrogenase family. In terms of assembly, homotetramer.

Its subcellular location is the cytoplasm. It carries out the reaction D-glyceraldehyde 3-phosphate + phosphate + NAD(+) = (2R)-3-phospho-glyceroyl phosphate + NADH + H(+). Its pathway is carbohydrate degradation; glycolysis; pyruvate from D-glyceraldehyde 3-phosphate: step 1/5. Catalyzes the oxidative phosphorylation of glyceraldehyde 3-phosphate (G3P) to 1,3-bisphosphoglycerate (BPG) using the cofactor NAD. The first reaction step involves the formation of a hemiacetal intermediate between G3P and a cysteine residue, and this hemiacetal intermediate is then oxidized to a thioester, with concomitant reduction of NAD to NADH. The reduced NADH is then exchanged with the second NAD, and the thioester is attacked by a nucleophilic inorganic phosphate to produce BPG. The chain is Glyceraldehyde-3-phosphate dehydrogenase (gap) from Chlamydia muridarum (strain MoPn / Nigg).